Reading from the N-terminus, the 56-residue chain is Large ribosomal subunit protein bL32 (56 aa).

Over residues 1 to 16 (MAVQKSKKSRSMRGMR) the composition is skewed to basic residues. Residues 1–33 (MAVQKSKKSRSMRGMRRSHDALTTSAVSVDATS) are disordered. The span at 21 to 33 (ALTTSAVSVDATS) shows a compositional bias: polar residues.

It belongs to the bacterial ribosomal protein bL32 family.

The protein is Large ribosomal subunit protein bL32 of Aliivibrio fischeri (strain ATCC 700601 / ES114) (Vibrio fischeri).